The following is a 239-amino-acid chain: LexA repressor (239 aa).

The segment at residues 26 to 46 is a DNA-binding region (H-T-H motif); the sequence is FDEMKDALDLASKSGIHRLIT. Active-site for autocatalytic cleavage activity residues include Ser-159 and Lys-197.

The protein belongs to the peptidase S24 family. As to quaternary structure, homodimer.

The catalysed reaction is Hydrolysis of Ala-|-Gly bond in repressor LexA.. Its function is as follows. Represses a number of genes involved in the response to DNA damage (SOS response), including recA and lexA. In the presence of single-stranded DNA, RecA interacts with LexA causing an autocatalytic cleavage which disrupts the DNA-binding part of LexA, leading to derepression of the SOS regulon and eventually DNA repair. The protein is LexA repressor of Allorhizobium ampelinum (strain ATCC BAA-846 / DSM 112012 / S4) (Agrobacterium vitis (strain S4)).